A 78-amino-acid polypeptide reads, in one-letter code: Small ribosomal subunit protein bS18 (78 aa).

Belongs to the bacterial ribosomal protein bS18 family. Part of the 30S ribosomal subunit. Forms a tight heterodimer with protein bS6.

Functionally, binds as a heterodimer with protein bS6 to the central domain of the 16S rRNA, where it helps stabilize the platform of the 30S subunit. This is Small ribosomal subunit protein bS18 from Acidothermus cellulolyticus (strain ATCC 43068 / DSM 8971 / 11B).